Consider the following 463-residue polypeptide: Siroheme synthase 1 (463 aa).

The interval 1 to 203 (MDFLPLFCQL…GQQQAAEESV (203 aa)) is precorrin-2 dehydrogenase /sirohydrochlorin ferrochelatase. Residues 22–23 (EV) and 43–44 (PH) each bind NAD(+). At serine 128 the chain carries Phosphoserine. Positions 215 to 463 (GSVTLVGAGP…YGEANTLAGV (249 aa)) are uroporphyrinogen-III C-methyltransferase. Proline 224 contacts S-adenosyl-L-methionine. Aspartate 247 serves as the catalytic Proton acceptor. The active-site Proton donor is the lysine 269. S-adenosyl-L-methionine-binding positions include 300–302 (GGD), isoleucine 305, 330–331 (TA), methionine 382, and glycine 411.

The protein in the N-terminal section; belongs to the precorrin-2 dehydrogenase / sirohydrochlorin ferrochelatase family. In the C-terminal section; belongs to the precorrin methyltransferase family.

It carries out the reaction uroporphyrinogen III + 2 S-adenosyl-L-methionine = precorrin-2 + 2 S-adenosyl-L-homocysteine + H(+). The catalysed reaction is precorrin-2 + NAD(+) = sirohydrochlorin + NADH + 2 H(+). It catalyses the reaction siroheme + 2 H(+) = sirohydrochlorin + Fe(2+). The protein operates within cofactor biosynthesis; adenosylcobalamin biosynthesis; precorrin-2 from uroporphyrinogen III: step 1/1. Its pathway is cofactor biosynthesis; adenosylcobalamin biosynthesis; sirohydrochlorin from precorrin-2: step 1/1. It functions in the pathway porphyrin-containing compound metabolism; siroheme biosynthesis; precorrin-2 from uroporphyrinogen III: step 1/1. It participates in porphyrin-containing compound metabolism; siroheme biosynthesis; siroheme from sirohydrochlorin: step 1/1. The protein operates within porphyrin-containing compound metabolism; siroheme biosynthesis; sirohydrochlorin from precorrin-2: step 1/1. In terms of biological role, multifunctional enzyme that catalyzes the SAM-dependent methylations of uroporphyrinogen III at position C-2 and C-7 to form precorrin-2 via precorrin-1. Then it catalyzes the NAD-dependent ring dehydrogenation of precorrin-2 to yield sirohydrochlorin. Finally, it catalyzes the ferrochelation of sirohydrochlorin to yield siroheme. The polypeptide is Siroheme synthase 1 (Aeromonas hydrophila subsp. hydrophila (strain ATCC 7966 / DSM 30187 / BCRC 13018 / CCUG 14551 / JCM 1027 / KCTC 2358 / NCIMB 9240 / NCTC 8049)).